Reading from the N-terminus, the 204-residue chain is Urease accessory protein UreG (204 aa).

15–22 (GPVGSGKT) provides a ligand contact to GTP.

The protein belongs to the SIMIBI class G3E GTPase family. UreG subfamily. In terms of assembly, homodimer. UreD, UreF and UreG form a complex that acts as a GTP-hydrolysis-dependent molecular chaperone, activating the urease apoprotein by helping to assemble the nickel containing metallocenter of UreC. The UreE protein probably delivers the nickel.

It is found in the cytoplasm. Functionally, facilitates the functional incorporation of the urease nickel metallocenter. This process requires GTP hydrolysis, probably effectuated by UreG. The polypeptide is Urease accessory protein UreG (Methylobacterium sp. (strain 4-46)).